The chain runs to 313 residues: Small ribosomal subunit biogenesis GTPase RsgA (313 aa).

Residues 82 to 235 (REKLIAANAT…IIDSPGIQQF (154 aa)) enclose the CP-type G domain. Residues 127 to 130 (NKTD) and 177 to 185 (GQSGMGKST) contribute to the GTP site. Cysteine 259, cysteine 264, histidine 266, and cysteine 272 together coordinate Zn(2+).

This sequence belongs to the TRAFAC class YlqF/YawG GTPase family. RsgA subfamily. In terms of assembly, monomer. Associates with 30S ribosomal subunit, binds 16S rRNA. The cofactor is Zn(2+).

Its subcellular location is the cytoplasm. Its function is as follows. One of several proteins that assist in the late maturation steps of the functional core of the 30S ribosomal subunit. Helps release RbfA from mature subunits. May play a role in the assembly of ribosomal proteins into the subunit. Circularly permuted GTPase that catalyzes slow GTP hydrolysis, GTPase activity is stimulated by the 30S ribosomal subunit. This chain is Small ribosomal subunit biogenesis GTPase RsgA, found in Nitrosospira multiformis (strain ATCC 25196 / NCIMB 11849 / C 71).